The sequence spans 448 residues: Keratin, type I cytoskeletal 27 (448 aa).

Residues 1-73 (MSVRFSSASR…ANEHGLLSGN (73 aa)) are head. Residues 74–109 (EKVTMQNLNDRLASYLENVQALEEANADLEQKIKDW) form a coil 1A region. Positions 74–389 (EKVTMQNLND…RLIDGDEGSC (316 aa)) constitute an IF rod domain. The linker 1 stretch occupies residues 110–131 (YEKFGPGSCRGLDHDYSRYFPI). A coil 1B region spans residues 132–223 (IDDLRTQIIS…KNHEEEMQAL (92 aa)). A linker 12 region spans residues 224-246 (QCAAGGNVNVEMNAAPGVDLTVL). The tract at residues 247-385 (LNNMRAEYEA…ETYCRLIDGD (139 aa)) is coil 2. The interval 386–448 (EGSCVKAKGQ…VNKTEQRIPS (63 aa)) is tail. The tract at residues 427–448 (SRVHTLEEKSTKVNKTEQRIPS) is disordered. Basic and acidic residues predominate over residues 430 to 448 (HTLEEKSTKVNKTEQRIPS).

The protein belongs to the intermediate filament family. In terms of assembly, heterotetramer of two type I and two type II keratins. Interacts with KRT6A to form filaments. In terms of tissue distribution, expressed in skin. Expressed in the Henle layer and cuticle of the irs in hair follicle bulb. In the hair follicle, expression was observed in all layers of the irs but was stronger in the Henle layer and cuticle than the Huxley layer until the Henle layer differentiated (at protein level).

It localises to the cytoplasm. Its function is as follows. Essential for the proper assembly of type I and type II keratin protein complexes and formation of keratin intermediate filaments in the inner root sheath (irs). This chain is Keratin, type I cytoskeletal 27, found in Mus musculus (Mouse).